Here is a 436-residue protein sequence, read N- to C-terminus: Ribulose bisphosphate carboxylase large chain (436 aa).

2 residues coordinate substrate: Asn-104 and Thr-154. Lys-156 (proton acceptor) is an active-site residue. Lys-158 provides a ligand contact to substrate. Residues Lys-182, Asp-184, and Glu-185 each contribute to the Mg(2+) site. Lys-182 bears the N6-carboxylysine mark. His-275 (proton acceptor) is an active-site residue. The substrate site is built by Arg-276, His-308, and Ser-360.

Belongs to the RuBisCO large chain family. Type I subfamily. In terms of assembly, heterohexadecamer of 8 large chains and 8 small chains; disulfide-linked. The disulfide link is formed within the large subunit homodimers. Requires Mg(2+) as cofactor. Post-translationally, the disulfide bond which can form in the large chain dimeric partners within the hexadecamer appears to be associated with oxidative stress and protein turnover.

Its subcellular location is the plastid. The protein resides in the chloroplast. It carries out the reaction 2 (2R)-3-phosphoglycerate + 2 H(+) = D-ribulose 1,5-bisphosphate + CO2 + H2O. The catalysed reaction is D-ribulose 1,5-bisphosphate + O2 = 2-phosphoglycolate + (2R)-3-phosphoglycerate + 2 H(+). Functionally, ruBisCO catalyzes two reactions: the carboxylation of D-ribulose 1,5-bisphosphate, the primary event in carbon dioxide fixation, as well as the oxidative fragmentation of the pentose substrate in the photorespiration process. Both reactions occur simultaneously and in competition at the same active site. This chain is Ribulose bisphosphate carboxylase large chain, found in Euglena geniculata.